The following is a 307-amino-acid chain: N-acetylneuraminate lyase (307 aa).

The aceneuramate site is built by Thr51 and Thr52. Tyr143 serves as the catalytic Proton donor. Lys173 acts as the Schiff-base intermediate with substrate in catalysis. Ser175, Gly199, Asp201, Glu202, and Ser218 together coordinate aceneuramate.

Belongs to the DapA family. NanA subfamily. Homotetramer.

It is found in the cytoplasm. It catalyses the reaction aceneuramate = aldehydo-N-acetyl-D-mannosamine + pyruvate. It functions in the pathway amino-sugar metabolism; N-acetylneuraminate degradation. In terms of biological role, catalyzes the cleavage of N-acetylneuraminic acid (sialic acid) to form pyruvate and N-acetylmannosamine via a Schiff base intermediate. It prevents sialic acids from being recycled and returning to the cell surface. Involved in the N-glycolylneuraminic acid (Neu5Gc) degradation pathway. The polypeptide is N-acetylneuraminate lyase (Danio rerio (Zebrafish)).